Reading from the N-terminus, the 70-residue chain is U2-agatoxin-Ao1m (70 aa).

Positions 1-20 are cleaved as a signal peptide; sequence MRAIISLFLISAMVFSMIQA. Residues 21–34 constitute a propeptide that is removed on maturation; the sequence is VPEEXGLQLSEDER. 3 cysteine pairs are disulfide-bonded: Cys-37/Cys-53, Cys-44/Cys-58, and Cys-52/Cys-68. Leu-69 is modified (leucine amide).

This sequence belongs to the neurotoxin 01 (U2-agtx) family. As to expression, expressed by the venom gland.

The protein resides in the secreted. In terms of biological role, insect active toxin causing rapid but reversible paralysis in crickets. No activity shown in mammals. Does not show effect on mammalian voltage-gated calcium channels. The chain is U2-agatoxin-Ao1m from Agelena orientalis (Funnel-web spider).